The sequence spans 89 residues: Small ribosomal subunit protein uS15 (89 aa).

It belongs to the universal ribosomal protein uS15 family. In terms of assembly, part of the 30S ribosomal subunit. Forms a bridge to the 50S subunit in the 70S ribosome, contacting the 23S rRNA.

Its function is as follows. One of the primary rRNA binding proteins, it binds directly to 16S rRNA where it helps nucleate assembly of the platform of the 30S subunit by binding and bridging several RNA helices of the 16S rRNA. Functionally, forms an intersubunit bridge (bridge B4) with the 23S rRNA of the 50S subunit in the ribosome. The polypeptide is Small ribosomal subunit protein uS15 (Gloeobacter violaceus (strain ATCC 29082 / PCC 7421)).